The sequence spans 795 residues: ATP-dependent RNA helicase DHX15 (795 aa).

Positions 1 to 108 (MSKRHRLDLG…HSTHAGHAGH (108 aa)) are disordered. Phosphoserine is present on S15. Positions 20 to 62 (AGTDGKDRDRDRDREDRSKDRDRERDRGDREREREKEKEKELR) are enriched in basic and acidic residues. The span at 79 to 108 (ASHSAHSTHSAHSAHSTHSAHSTHAGHAGH) shows a compositional bias: low complexity. Residues 147 to 313 (TDILVRHQSF…FDNCPLLTIP (167 aa)) form the Helicase ATP-binding domain. An ATP-binding site is contributed by 160–167 (GETGSGKT). A DEAH box motif is present at residues 260–263 (DEAH). Residues 338–518 (TVIQIHMCEE…SVVLQLKKLG (181 aa)) form the Helicase C-terminal domain. Position 488 is an N6-acetyllysine (K488). K786 is covalently cross-linked (Glycyl lysine isopeptide (Lys-Gly) (interchain with G-Cter in SUMO2)).

This sequence belongs to the DEAD box helicase family. DEAH subfamily. DDX15/PRP43 sub-subfamily. In terms of assembly, component of the U11/U12 snRNPs that are part of the U12-type spliceosome. Identified in the Intron Large spliceosome complex (IL, also named intron lariat spliceosome), a post-mRNA release spliceosomal complex containing the excised intron, U2, U5 and U6 snRNPs, and splicing factors; the association may be transient. The IL complex exists in two distinct conformations, one with the DHX15 (ILS2) and one without (ILS1). Interacts with TFIP11 (via G-patch domain); indicative for a recruitment to the IL complex. Interacts with SSB/La. Interacts with GPATCH2 (via G-patch domain); promoting the RNA helicase activity. Interacts with NKRF (via G-patch domain); promoting the RNA helicase activity. Interacts with NLRP6.

The protein resides in the nucleus. The protein localises to the nucleolus. It catalyses the reaction ATP + H2O = ADP + phosphate + H(+). With respect to regulation, ATPase activity is enhanced upon binding to G-patch domain-containing proteins. G-patch domain-containing proteins act like a brace that tethers mobile sections of DHX15 together, stabilizing a functional conformation with high RNA affinity, thereby promoting the ATPase activity. RNA helicase involved in mRNA processing and antiviral innate immunity. Pre-mRNA processing factor involved in disassembly of spliceosomes after the release of mature mRNA. In cooperation with TFIP11 seem to be involved in the transition of the U2, U5 and U6 snRNP-containing IL complex to the snRNP-free IS complex leading to efficient debranching and turnover of excised introns. Plays a key role in antiviral innate immunity by promoting both MAVS-dependent signaling and NLRP6 inflammasome. Acts as an RNA virus sensor: recognizes and binds viral double stranded RNA (dsRNA) and activates the MAVS-dependent signaling to produce interferon-beta and interferon lambda-3 (IFNL3). Involved in intestinal antiviral innate immunity together with NLRP6: recognizes and binds viral dsRNA and promotes activation of the NLRP6 inflammasome in intestinal epithelial cells to restrict infection by enteric viruses. The NLRP6 inflammasome acts by promoting maturation and secretion of IL18 in the extracellular milieu. Also involved in antibacterial innate immunity by promoting Wnt-induced antimicrobial protein expression in Paneth cells. In Pongo abelii (Sumatran orangutan), this protein is ATP-dependent RNA helicase DHX15.